The following is a 177-amino-acid chain: Large ribosomal subunit protein uL10 (177 aa).

Belongs to the universal ribosomal protein uL10 family. As to quaternary structure, part of the ribosomal stalk of the 50S ribosomal subunit. The N-terminus interacts with L11 and the large rRNA to form the base of the stalk. The C-terminus forms an elongated spine to which L12 dimers bind in a sequential fashion forming a multimeric L10(L12)X complex.

Functionally, forms part of the ribosomal stalk, playing a central role in the interaction of the ribosome with GTP-bound translation factors. The sequence is that of Large ribosomal subunit protein uL10 from Legionella pneumophila (strain Corby).